The sequence spans 362 residues: Alternative oxidase, mitochondrial (362 aa).

The N-terminal 64 residues, 1-64 (MNTPKVNILY…RGFTTTSVVR (64 aa)), are a transit peptide targeting the mitochondrion. The helical transmembrane segment at 156–176 (LVRFIFLESIAGVPGMVAGML) threads the bilayer. Residues Glu-163, Glu-202, and His-205 each coordinate Fe cation. The chain crosses the membrane as a helical span at residues 222–242 (LILGAQGVFFNAMFLSYLVSP). Fe cation-binding residues include Glu-253, Glu-310, and His-313.

Belongs to the alternative oxidase family. Requires Fe cation as cofactor.

The protein localises to the mitochondrion inner membrane. Functionally, catalyzes cyanide-resistant oxygen consumption. May increase respiration when the cytochrome respiratory pathway is restricted, or in response to low temperatures. This chain is Alternative oxidase, mitochondrial (aod-1), found in Gelasinospora sp. (strain S23).